The sequence spans 268 residues: Esterase GME11355 (268 aa).

Active-site charge relay system residues include Ser-122, Asp-212, and His-240.

This sequence belongs to the LovG family.

It functions in the pathway secondary metabolite biosynthesis. In terms of biological role, esterase; part of the gene cluster that mediates the biosynthesis of dibenzodioxocinones such as pestalotiollide B, a novel class of inhibitors against cholesterol ester transfer protein (CEPT). The biosynthesis initiates from condensation of acetate and malonate units catalyzed by the non-reducing PKS pks8/GME11356. Pks8/GME11356 lacks a thioesterase (TE) domain, which is important to the cyclizing of the third ring of atrochrysone carboxylic acid, and the esterase GME11355 might play the role of TE and catalyzes the cyclization reaction of the C ring. The lactamase-like protein GME11357 (or other beta-lactamases in Pestalotiopsis microspora) probably hydrolyzes the thioester bond between the ACP of pks8/GME11356 and the intermediate to release atrochrysone carboxylic acid, which is spontaneously dehydrates to form endocrocin anthrone. Endocrocin anthrone is further converted to emodin via the endocrocin intermediate. Emodin is then oxidized by several enzymes such as the Baeyer-Villiger oxidase GME11358, the oxidoreductase GME11367, the short chain dehydrogenase/reductase GME11373, as well as by other oxidoreductases from the cluster, to modify the A and C rings and open the B ring, and finally yield monodictyphenone. The prenyltransferase GME11375 may catalyze the addition reaction between the C5 side chains and the carbon bone of dibenzodioxocinones. The remaining biochemical reactions to the final product dibenzodioxocinones should be methylation catalyzed by methyltransferase GME11366 and reduction and lactonization reaction catalyzed by a series of oxidordeuctases. The protein is Esterase GME11355 of Pestalotiopsis microspora.